Consider the following 165-residue polypeptide: MANPNKRIMNKKSKQASISSILNFFFFYIMEYFVAVDNETPLGVFTSIEQCEETMKQYPGLHYVVFKYTCPADAENTDVVYLIPSLTLHTPMFVDHCPNRTKQARHVLKKINLVFEEESIENWKVSVNTVFPHVHNRLSAPKFSIDEANEAVEKFLIQAGRLMSL.

A helical membrane pass occupies residues 16 to 36 (ASISSILNFFFFYIMEYFVAV).

The protein belongs to the asfivirus F165R family.

It is found in the host membrane. This is an uncharacterized protein from African swine fever virus (strain Badajoz 1971 Vero-adapted) (Ba71V).